We begin with the raw amino-acid sequence, 1783 residues long: Trans-splicing factor Raa3, chloroplastic (1783 aa).

The transit peptide at Met1–Ser40 directs the protein to the chloroplast. Disordered regions lie at residues Ala97–Asn378, Ala420–Gln484, Ala563–Lys610, Ser652–Ala709, Ala918–Ser971, Arg1395–Gln1427, Pro1476–Arg1506, and Val1620–Gly1639. The segment covering Asp105–Gly118 has biased composition (gly residues). 3 stretches are compositionally biased toward low complexity: residues Gln126–Pro157, Ala186–Ala205, and Ala224–Gln242. Over residues Asp256–Ile273 the composition is skewed to basic and acidic residues. Residues Ala277–Pro289 are compositionally biased toward low complexity. Residues Leu307–Ser316 are compositionally biased toward polar residues. Low complexity-rich tracts occupy residues Ser343–Asn374, Ala420–Ser436, Arg577–Gly599, Pro655–Ser669, Ser676–Ala709, Ser928–Ala970, and Gln1403–Asp1417. Basic residues-rich tracts occupy residues Lys1494–Arg1506 and Val1620–Ala1630. The region spanning Leu1713–Glu1772 is the RAP domain.

In terms of assembly, part of a 1700 kDa complex that includes the precursor RNA to exon 1 and the tscA RNA.

It localises to the plastid. Its subcellular location is the chloroplast stroma. Required for trans-splicing of exons 1 and 2 of the chloroplast encoded psaA mRNA (a group II intron). May be required for stability of the chloroplast RNA-protein complex in which it is found. This is Trans-splicing factor Raa3, chloroplastic (RAA3) from Chlamydomonas reinhardtii (Chlamydomonas smithii).